The primary structure comprises 658 residues: UvrABC system protein C (658 aa).

A GIY-YIG domain is found at 62–140 (PKPGVYRMLD…IKRFRPPYNV (79 aa)). The 36-residue stretch at 250–285 (GAVQREIEAQMHKAAEDLDFERAAMLRDRLRAATFI) folds into the UVR domain.

This sequence belongs to the UvrC family. As to quaternary structure, interacts with UvrB in an incision complex.

Its subcellular location is the cytoplasm. Its function is as follows. The UvrABC repair system catalyzes the recognition and processing of DNA lesions. UvrC both incises the 5' and 3' sides of the lesion. The N-terminal half is responsible for the 3' incision and the C-terminal half is responsible for the 5' incision. The chain is UvrABC system protein C from Novosphingobium aromaticivorans (strain ATCC 700278 / DSM 12444 / CCUG 56034 / CIP 105152 / NBRC 16084 / F199).